The following is a 190-amino-acid chain: Putative 3-methyladenine DNA glycosylase (190 aa).

It belongs to the DNA glycosylase MPG family.

This chain is Putative 3-methyladenine DNA glycosylase, found in Corynebacterium efficiens (strain DSM 44549 / YS-314 / AJ 12310 / JCM 11189 / NBRC 100395).